We begin with the raw amino-acid sequence, 254 residues long: Adenosylcobinamide-GDP ribazoletransferase (254 aa).

A run of 7 helical transmembrane segments spans residues 27–47, 50–70, 104–124, 131–151, 170–190, 194–214, and 233–253; these read SSLY…VLLA, GMGV…GLIL, VGSF…ICLL, AYGM…LLAA, AGWP…FVLL, LAPS…VGWL, and LVEA…FWAI.

Belongs to the CobS family. Mg(2+) is required as a cofactor.

It localises to the cell inner membrane. The catalysed reaction is alpha-ribazole + adenosylcob(III)inamide-GDP = adenosylcob(III)alamin + GMP + H(+). It catalyses the reaction alpha-ribazole 5'-phosphate + adenosylcob(III)inamide-GDP = adenosylcob(III)alamin 5'-phosphate + GMP + H(+). Its pathway is cofactor biosynthesis; adenosylcobalamin biosynthesis; adenosylcobalamin from cob(II)yrinate a,c-diamide: step 7/7. In terms of biological role, joins adenosylcobinamide-GDP and alpha-ribazole to generate adenosylcobalamin (Ado-cobalamin). Also synthesizes adenosylcobalamin 5'-phosphate from adenosylcobinamide-GDP and alpha-ribazole 5'-phosphate. The protein is Adenosylcobinamide-GDP ribazoletransferase of Chlorobaculum tepidum (strain ATCC 49652 / DSM 12025 / NBRC 103806 / TLS) (Chlorobium tepidum).